The primary structure comprises 570 residues: Urease subunit alpha (570 aa).

Positions 131 to 570 constitute a Urease domain; the sequence is GGFDSHIHFI…LPMAQRYFLF (440 aa). Residues histidine 136, histidine 138, and lysine 219 each coordinate Ni(2+). Lysine 219 bears the N6-carboxylysine mark. Residue histidine 221 coordinates substrate. Ni(2+)-binding residues include histidine 248 and histidine 274. Catalysis depends on histidine 322, which acts as the Proton donor. Position 362 (aspartate 362) interacts with Ni(2+).

Belongs to the metallo-dependent hydrolases superfamily. Urease alpha subunit family. As to quaternary structure, heterotrimer of UreA (gamma), UreB (beta) and UreC (alpha) subunits. Three heterotrimers associate to form the active enzyme. Requires Ni cation as cofactor. In terms of processing, carboxylation allows a single lysine to coordinate two nickel ions.

The protein localises to the cytoplasm. The enzyme catalyses urea + 2 H2O + H(+) = hydrogencarbonate + 2 NH4(+). It functions in the pathway nitrogen metabolism; urea degradation; CO(2) and NH(3) from urea (urease route): step 1/1. This chain is Urease subunit alpha, found in Beijerinckia indica subsp. indica (strain ATCC 9039 / DSM 1715 / NCIMB 8712).